The chain runs to 616 residues: Dihydroxy-acid dehydratase (616 aa).

Asp-81 lines the Mg(2+) pocket. Cys-122 serves as a coordination point for [2Fe-2S] cluster. 2 residues coordinate Mg(2+): Asp-123 and Lys-124. Residue Lys-124 is modified to N6-carboxylysine. Cys-195 is a binding site for [2Fe-2S] cluster. Residue Glu-491 participates in Mg(2+) binding. The active-site Proton acceptor is the Ser-517.

It belongs to the IlvD/Edd family. In terms of assembly, homodimer. It depends on [2Fe-2S] cluster as a cofactor. Mg(2+) serves as cofactor.

The catalysed reaction is (2R)-2,3-dihydroxy-3-methylbutanoate = 3-methyl-2-oxobutanoate + H2O. It catalyses the reaction (2R,3R)-2,3-dihydroxy-3-methylpentanoate = (S)-3-methyl-2-oxopentanoate + H2O. It participates in amino-acid biosynthesis; L-isoleucine biosynthesis; L-isoleucine from 2-oxobutanoate: step 3/4. The protein operates within amino-acid biosynthesis; L-valine biosynthesis; L-valine from pyruvate: step 3/4. In terms of biological role, functions in the biosynthesis of branched-chain amino acids. Catalyzes the dehydration of (2R,3R)-2,3-dihydroxy-3-methylpentanoate (2,3-dihydroxy-3-methylvalerate) into 2-oxo-3-methylpentanoate (2-oxo-3-methylvalerate) and of (2R)-2,3-dihydroxy-3-methylbutanoate (2,3-dihydroxyisovalerate) into 2-oxo-3-methylbutanoate (2-oxoisovalerate), the penultimate precursor to L-isoleucine and L-valine, respectively. This chain is Dihydroxy-acid dehydratase, found in Azoarcus sp. (strain BH72).